We begin with the raw amino-acid sequence, 512 residues long: D-alanine--D-alanyl carrier protein ligase (512 aa).

152-153 lines the ATP pocket; sequence TS. Residue Asp-199 coordinates D-alanine. 294–299 is an ATP binding site; it reads NAYGPT. Val-303 contacts D-alanine. ATP-binding positions include Asp-385, 397 to 400, and Lys-499; that span reads YGGR. Lys-499 serves as a coordination point for D-alanine.

Belongs to the ATP-dependent AMP-binding enzyme family. DltA subfamily.

The protein resides in the cytoplasm. It carries out the reaction holo-[D-alanyl-carrier protein] + D-alanine + ATP = D-alanyl-[D-alanyl-carrier protein] + AMP + diphosphate. It participates in cell wall biogenesis; lipoteichoic acid biosynthesis. In terms of biological role, catalyzes the first step in the D-alanylation of lipoteichoic acid (LTA), the activation of D-alanine and its transfer onto the D-alanyl carrier protein (Dcp) DltC. In an ATP-dependent two-step reaction, forms a high energy D-alanyl-AMP intermediate, followed by transfer of the D-alanyl residue as a thiol ester to the phosphopantheinyl prosthetic group of the Dcp. D-alanylation of LTA plays an important role in modulating the properties of the cell wall in Gram-positive bacteria, influencing the net charge of the cell wall. This Streptococcus pyogenes serotype M18 (strain MGAS8232) protein is D-alanine--D-alanyl carrier protein ligase.